Consider the following 207-residue polypeptide: Dephospho-CoA kinase (207 aa).

A DPCK domain is found at 10–207 (ILGLTGGIGS…FYLTLRGGQP (198 aa)). 18 to 23 (GSGKSA) contacts ATP.

It belongs to the CoaE family.

Its subcellular location is the cytoplasm. The enzyme catalyses 3'-dephospho-CoA + ATP = ADP + CoA + H(+). It functions in the pathway cofactor biosynthesis; coenzyme A biosynthesis; CoA from (R)-pantothenate: step 5/5. Its function is as follows. Catalyzes the phosphorylation of the 3'-hydroxyl group of dephosphocoenzyme A to form coenzyme A. The chain is Dephospho-CoA kinase from Pseudomonas putida (Arthrobacter siderocapsulatus).